We begin with the raw amino-acid sequence, 55 residues long: Large ribosomal subunit protein bL33B (55 aa).

This sequence belongs to the bacterial ribosomal protein bL33 family.

This chain is Large ribosomal subunit protein bL33B (rpmG2), found in Mycobacterium tuberculosis (strain CDC 1551 / Oshkosh).